A 391-amino-acid polypeptide reads, in one-letter code: Elongation factor Tu (391 aa).

The 192-residue stretch at 10–201 (KPHVNIGTVG…AVDEYIPTPE (192 aa)) folds into the tr-type G domain. Positions 19 to 26 (GHVDHGKT) are G1. 19–26 (GHVDHGKT) provides a ligand contact to GTP. Threonine 26 provides a ligand contact to Mg(2+). Residues 55–59 (GITIS) are G2. Residues 76 to 79 (DCPG) form a G3 region. GTP is bound by residues 76–80 (DCPGH) and 131–134 (NKVD). The tract at residues 131–134 (NKVD) is G4. Residues 169 to 171 (SAL) form a G5 region.

Belongs to the TRAFAC class translation factor GTPase superfamily. Classic translation factor GTPase family. EF-Tu/EF-1A subfamily. As to quaternary structure, monomer.

The protein localises to the cytoplasm. The catalysed reaction is GTP + H2O = GDP + phosphate + H(+). Its function is as follows. GTP hydrolase that promotes the GTP-dependent binding of aminoacyl-tRNA to the A-site of ribosomes during protein biosynthesis. In Ruegeria sp. (strain TM1040) (Silicibacter sp.), this protein is Elongation factor Tu.